The chain runs to 861 residues: Major vault protein (861 aa).

N-acetylalanine is present on Ala2. MVP repeat units follow at residues Ala2–Arg56, His57–Pro111, Leu112–Gln164, Ala165–Asp217, Ala218–Pro272, Ile273–Val323, Tyr324–Ala379, Ile380–Val457, and Val458–Pro520. Ser421 carries the post-translational modification Phosphoserine. Lys444 is covalently cross-linked (Glycyl lysine isopeptide (Lys-Gly) (interchain with G-Cter in SUMO2)). Lys704 participates in a covalent cross-link: Glycyl lysine isopeptide (Lys-Gly) (interchain with G-Cter in SUMO2).

The vault ribonucleoprotein particle is a huge (400 A x 670 A) cage structure of 12.9 MDa. It consists of a dimer of half-vaults, with each half-vault comprising 39 identical major vault protein (MVP) chains, PARP4 and one or more vault RNAs (vRNAs). Interacts with PTEN and activated MAPK1. The phosphorylated protein interacts with the SH2 domains of PTPN11 and SRC. Interacts with APEX1. May interact with ZNF540. Interacts with TEP1. In terms of processing, phosphorylated on Tyr residues after EGF stimulation. Dephosphorylated by PTPN11.

The protein resides in the cytoplasm. Its subcellular location is the nucleus. Required for normal vault structure. Vaults are multi-subunit structures that may act as scaffolds for proteins involved in signal transduction. Vaults may also play a role in nucleo-cytoplasmic transport. Down-regulates IFNG-mediated STAT1 signaling and subsequent activation of JAK. Down-regulates SRC activity and signaling through MAP kinases. In Mus musculus (Mouse), this protein is Major vault protein (Mvp).